We begin with the raw amino-acid sequence, 105 residues long: Secreted effector protein PINE1 (105 aa).

The first 21 residues, 1 to 21 (MKLSQPLSIFAILAASTVAVA), serve as a signal peptide directing secretion.

In terms of assembly, interacts with Arabidopsis thaliana PGIP1.

Its subcellular location is the secreted. Its function is as follows. Effector protein required for full virulence. Directly interacts with and functionally inactivates PG-inhibiting proteins (PGIPs). PGIPs are a defense mechanism of infected plants, that inhibit the plant pathogens secreted polygalacturonases (PGs) used to degrade the plant cell wall. Excerts its function by interacting with host PGIPs to negate their polygalacturonase-inhibiting function via enhanced dissociation of PGIPs from PGs. The protein is Secreted effector protein PINE1 of Sclerotinia sclerotiorum (strain ATCC 18683 / 1980 / Ss-1) (White mold).